Reading from the N-terminus, the 252-residue chain is Probable transcriptional regulatory protein Kole_1935 (252 aa).

This sequence belongs to the TACO1 family.

Its subcellular location is the cytoplasm. This Kosmotoga olearia (strain ATCC BAA-1733 / DSM 21960 / TBF 19.5.1) protein is Probable transcriptional regulatory protein Kole_1935.